Reading from the N-terminus, the 2358-residue chain is Cell wall alpha-1,3-glucan synthase mok13 (2358 aa).

Positions 1645–1659 (EGLENEENELKDKAP) are enriched in basic and acidic residues. The tract at residues 1645–1669 (EGLENEENELKDKAPPNEPNVGSLF) is disordered.

This sequence belongs to the glycosyltransferase group 1 family.

It carries out the reaction [(1-&gt;3)-alpha-D-glucosyl](n) + UDP-alpha-D-glucose = [(1-&gt;3)-alpha-D-glucosyl](n+1) + UDP + H(+). In Schizosaccharomyces pombe (strain 972 / ATCC 24843) (Fission yeast), this protein is Cell wall alpha-1,3-glucan synthase mok13 (mok13).